The sequence spans 361 residues: Alanine racemase (361 aa).

Lysine 34 functions as the Proton acceptor; specific for D-alanine in the catalytic mechanism. Lysine 34 carries the post-translational modification N6-(pyridoxal phosphate)lysine. Position 129 (arginine 129) interacts with substrate. Tyrosine 256 (proton acceptor; specific for L-alanine) is an active-site residue. Methionine 304 lines the substrate pocket.

The protein belongs to the alanine racemase family. It depends on pyridoxal 5'-phosphate as a cofactor.

It carries out the reaction L-alanine = D-alanine. It participates in amino-acid biosynthesis; D-alanine biosynthesis; D-alanine from L-alanine: step 1/1. Catalyzes the interconversion of L-alanine and D-alanine. May also act on other amino acids. This Corynebacterium glutamicum (strain R) protein is Alanine racemase (alr).